The following is an 864-amino-acid chain: Mitochondrial 15S rRNA processing factor CCM1 (864 aa).

A mitochondrion-targeting transit peptide spans 1 to 76; sequence MYMARCGPKN…REFSNTLKER (76 aa). PPR repeat units lie at residues 319–353 and 356–390; these read NKQN…STKH and DICT…NIKP.

This sequence belongs to the CCM1 family. Binds to mitochondrial small subunit 15S rRNA.

The protein resides in the mitochondrion. Functionally, regulates mitochondrial small subunit maturation by controlling 15S rRNA 5'-end processing. Localizes to the 5' precursor of the 15S rRNA in a position that is subsequently occupied by mS47 in the mature yeast mtSSU. Uses structure and sequence-specific RNA recognition, binding to a single-stranded region of the precursor and specifically recognizing bases -6 to -1. The exchange of Ccm1 for mS47 is coupled to the irreversible removal of precursor rRNA that is accompanied by conformational changes of the mitoribosomal proteins uS5m and mS26. These conformational changes signal completion of 5'-end rRNA processing through protection of the mature 5'-end of the 15S rRNA and stabilization of mS47. The removal of the 5' precursor together with the dissociation of Ccm1 may be catalyzed by the 5'-3' exoribonuclease Pet127. Involved in the specific removal of group I introns in mitochondrial encoded transcripts. This Saccharomyces cerevisiae (strain YJM789) (Baker's yeast) protein is Mitochondrial 15S rRNA processing factor CCM1 (CCM1).